A 461-amino-acid chain; its full sequence is Transforming growth factor beta-1-induced transcript 1 protein (461 aa).

Met-1 carries the N-acetylmethionine modification. The interval 1–87 is disordered; it reads MEDLDALLSD…PFSSSSGVLG (87 aa). Residues 1-200 form a transcription activation region; sequence MEDLDALLSD…GSPSPPEPTG (200 aa). The interval 1 to 240 is interaction with PTK2B/PYK2; sequence MEDLDALLSD…CNKPIAGQVV (240 aa). Positions 3–15 match the LD motif 1 motif; sequence DLDALLSDLETTT. At Thr-33 the chain carries Phosphothreonine. Tyr-38 is subject to Phosphotyrosine. The span at 40–52 shows a compositional bias: polar residues; that stretch reads HQPQTGSGESSGA. The residue at position 60 (Tyr-60) is a Phosphotyrosine; by FAK2 and FYN. Phosphoserine is present on Ser-68. The tract at residues 83–136 is interaction with PTK2/FAK1; it reads SGVLGTGLCELDRLLQELNATQFNITDEIMSQFPSSKVASGEQKEDQSEDKKRP. An LD motif 2 motif is present at residues 92 to 104; it reads ELDRLLQELNATQ. The tract at residues 116 to 152 is disordered; sequence PSSKVASGEQKEDQSEDKKRPSLPSSPSPGLPKASAT. Over residues 124-135 the composition is skewed to basic and acidic residues; that stretch reads EQKEDQSEDKKR. 6 positions are modified to phosphoserine: Ser-137, Ser-140, Ser-141, Ser-143, Ser-164, and Ser-186. The short motif at 157 to 168 is the LD motif 3 element; sequence ELDRLMASLSDF. Residues 172–205 form a disordered region; it reads NHLPASGPTQPPVVSSTNEGSPSPPEPTGKGSLD. Polar residues predominate over residues 183–192; it reads PVVSSTNEGS. Thr-188 is modified (phosphothreonine). 2 positions are modified to phosphoserine: Ser-192 and Ser-194. The LD motif 4 motif lies at 203–215; sequence SLDTMLGLLQSDL. LIM zinc-binding domains follow at residues 226 to 285, 286 to 343, 344 to 403, and 404 to 461; these read GLCG…RFSP, RCGF…QLFA, PRCQ…RRGS, and LCAT…KLFG. The residue at position 403 (Ser-403) is a Phosphoserine. At Thr-407 the chain carries Phosphothreonine.

The protein belongs to the paxillin family. In terms of assembly, homooligomer. Interacts with PPARG. Interacts with TRAF4. Interacts with CRIP2. Interacts with HSPB1. Interacts with ILK. Interacts with LIMS1 and LIMS2. Interacts with NCK2. Interacts with NUDT16L1. Interacts with PAK. Interacts with PTPN12. Interacts with TCF3. Interacts with TCF7L2. Interacts with VCL. Interacts (via LD motif 3) with GIT1. Also interacts with GIT2. Forms a complex with ARHGEF7. Interacts with AR/androgen receptor in a ligand-dependent manner. Interacts with CSK. Interacts with PTK2/FAK1 and PTK2B/PYK2. Interacts with SLC6A3 and SLC6A4. Interacts with NR3C1. Interacts with SMAD3. Interacts with MAPK15. Interacts with SRC. Interacts with LYN. Interacts with talin. Interacts (via LIM zinc-binding domain 2) with CBLC (via RING-type zinc finger); the interaction is direct and enhances CBLC E3 ubiquitin-protein ligase activity. Interacts with PARVA. Interacts with PXN. Post-translationally, phosphorylated by gonadotropin-releasing hormone-activated SRC. In terms of tissue distribution, expressed in platelets, smooth muscle and prostate stromal cells (at protein level).

The protein resides in the cell junction. The protein localises to the focal adhesion. It is found in the nucleus matrix. Its subcellular location is the cytoplasm. It localises to the cytoskeleton. Its function is as follows. Functions as a molecular adapter coordinating multiple protein-protein interactions at the focal adhesion complex and in the nucleus. Links various intracellular signaling modules to plasma membrane receptors and regulates the Wnt and TGFB signaling pathways. May also regulate SLC6A3 and SLC6A4 targeting to the plasma membrane hence regulating their activity. In the nucleus, functions as a nuclear receptor coactivator regulating glucocorticoid, androgen, mineralocorticoid and progesterone receptor transcriptional activity. May play a role in the processes of cell growth, proliferation, migration, differentiation and senescence. May have a zinc-dependent DNA-binding activity. The sequence is that of Transforming growth factor beta-1-induced transcript 1 protein (TGFB1I1) from Homo sapiens (Human).